Reading from the N-terminus, the 236-residue chain is 2,3,4,5-tetrahydropyridine-2,6-dicarboxylate N-acetyltransferase (236 aa).

This sequence belongs to the transferase hexapeptide repeat family. DapH subfamily.

It catalyses the reaction (S)-2,3,4,5-tetrahydrodipicolinate + acetyl-CoA + H2O = L-2-acetamido-6-oxoheptanedioate + CoA. It participates in amino-acid biosynthesis; L-lysine biosynthesis via DAP pathway; LL-2,6-diaminopimelate from (S)-tetrahydrodipicolinate (acetylase route): step 1/3. Its function is as follows. Catalyzes the transfer of an acetyl group from acetyl-CoA to tetrahydrodipicolinate. The sequence is that of 2,3,4,5-tetrahydropyridine-2,6-dicarboxylate N-acetyltransferase from Clostridium botulinum (strain Kyoto / Type A2).